The chain runs to 159 residues: Transcription elongation factor GreA (159 aa).

This sequence belongs to the GreA/GreB family.

Necessary for efficient RNA polymerase transcription elongation past template-encoded arresting sites. The arresting sites in DNA have the property of trapping a certain fraction of elongating RNA polymerases that pass through, resulting in locked ternary complexes. Cleavage of the nascent transcript by cleavage factors such as GreA or GreB allows the resumption of elongation from the new 3'terminus. GreA releases sequences of 2 to 3 nucleotides. This is Transcription elongation factor GreA from Buchnera aphidicola subsp. Cinara cedri (strain Cc).